A 122-amino-acid chain; its full sequence is MARIAGVNIPTAKRVVIALQYIHGIGPKKAEEITEKVGIPAERRVNQLTDAEVLQIREAIDRDYIVEGDLRREVSMNIKRLMDLGCYRGLRHRKQLPVRGQRTHTNARTRKGKAKPIAGKKK.

Residues 94-122 (KQLPVRGQRTHTNARTRKGKAKPIAGKKK) form a disordered region.

It belongs to the universal ribosomal protein uS13 family. Part of the 30S ribosomal subunit. Forms a loose heterodimer with protein S19. Forms two bridges to the 50S subunit in the 70S ribosome.

Located at the top of the head of the 30S subunit, it contacts several helices of the 16S rRNA. In the 70S ribosome it contacts the 23S rRNA (bridge B1a) and protein L5 of the 50S subunit (bridge B1b), connecting the 2 subunits; these bridges are implicated in subunit movement. Contacts the tRNAs in the A and P-sites. The protein is Small ribosomal subunit protein uS13 of Methylorubrum extorquens (strain PA1) (Methylobacterium extorquens).